A 180-amino-acid chain; its full sequence is ATP-dependent protease subunit HslV (180 aa).

The active site involves threonine 7. Positions 165, 168, and 171 each coordinate Na(+).

This sequence belongs to the peptidase T1B family. HslV subfamily. As to quaternary structure, a double ring-shaped homohexamer of HslV is capped on each side by a ring-shaped HslU homohexamer. The assembly of the HslU/HslV complex is dependent on binding of ATP.

The protein localises to the cytoplasm. The enzyme catalyses ATP-dependent cleavage of peptide bonds with broad specificity.. Its activity is regulated as follows. Allosterically activated by HslU binding. Its function is as follows. Protease subunit of a proteasome-like degradation complex believed to be a general protein degrading machinery. In Bacillus cytotoxicus (strain DSM 22905 / CIP 110041 / 391-98 / NVH 391-98), this protein is ATP-dependent protease subunit HslV.